Reading from the N-terminus, the 171-residue chain is Der GTPase-activating protein YihI (171 aa).

Disordered stretches follow at residues 1–99 (MKKP…PQAE) and 145–171 (GLSY…KGGN). A compositionally biased stretch (basic and acidic residues) spans 20–30 (TREELNQEARD). The segment covering 40–59 (HSAGSRANGSSASGSTAQNS) has biased composition (low complexity). Acidic residues predominate over residues 148-160 (YEDDEDDEEEEKQ).

This sequence belongs to the YihI family. In terms of assembly, interacts with Der.

Its function is as follows. A GTPase-activating protein (GAP) that modifies Der/EngA GTPase function. May play a role in ribosome biogenesis. This chain is Der GTPase-activating protein YihI, found in Enterobacter sp. (strain 638).